The sequence spans 401 residues: Enoyl-[acyl-carrier-protein] reductase [NADH] (401 aa).

NAD(+)-binding positions include 48 to 53 (GSSSGY), 74 to 75 (FE), 111 to 112 (DA), and 139 to 140 (LA). Y225 contacts substrate. Y235 (proton donor) is an active-site residue. NAD(+) contacts are provided by residues K244 and 273–275 (VVT).

This sequence belongs to the TER reductase family. In terms of assembly, monomer.

It carries out the reaction a 2,3-saturated acyl-[ACP] + NAD(+) = a (2E)-enoyl-[ACP] + NADH + H(+). Its pathway is lipid metabolism; fatty acid biosynthesis. Its function is as follows. Involved in the final reduction of the elongation cycle of fatty acid synthesis (FAS II). Catalyzes the reduction of a carbon-carbon double bond in an enoyl moiety that is covalently linked to an acyl carrier protein (ACP). This is Enoyl-[acyl-carrier-protein] reductase [NADH] from Shewanella putrefaciens (strain CN-32 / ATCC BAA-453).